The sequence spans 150 residues: Ribonuclease H (150 aa).

The 142-residue stretch at 3–144 folds into the RNase H type-1 domain; sequence DKDMIEIWTD…ADGLARKGTD (142 aa). Residues aspartate 12, glutamate 50, aspartate 72, and aspartate 136 each coordinate Mg(2+). Positions 129–150 are disordered; it reads DEGNERADGLARKGTDEVRGRK.

This sequence belongs to the RNase H family. As to quaternary structure, monomer. The cofactor is Mg(2+).

It localises to the cytoplasm. The catalysed reaction is Endonucleolytic cleavage to 5'-phosphomonoester.. In terms of biological role, endonuclease that specifically degrades the RNA of RNA-DNA hybrids. The sequence is that of Ribonuclease H from Hyphomonas neptunium (strain ATCC 15444).